We begin with the raw amino-acid sequence, 64 residues long: DNA gyrase inhibitor YacG (64 aa).

Residues Cys9, Cys12, Cys28, and Cys32 each contribute to the Zn(2+) site. A disordered region spans residues Asn45–Tyr64. Residues Ser54 to Tyr64 are compositionally biased toward acidic residues.

Belongs to the DNA gyrase inhibitor YacG family. Interacts with GyrB. Zn(2+) serves as cofactor.

Functionally, inhibits all the catalytic activities of DNA gyrase by preventing its interaction with DNA. Acts by binding directly to the C-terminal domain of GyrB, which probably disrupts DNA binding by the gyrase. The chain is DNA gyrase inhibitor YacG from Vibrio parahaemolyticus serotype O3:K6 (strain RIMD 2210633).